We begin with the raw amino-acid sequence, 118 residues long: Cysteine--tRNA ligase (118 aa).

Zn(2+) is bound at residue Cys28. A 'HIGH' region motif is present at residues 30 to 40 (PTVYNYIHIGN).

This sequence belongs to the class-I aminoacyl-tRNA synthetase family. In terms of assembly, monomer. Requires Zn(2+) as cofactor.

The protein localises to the cytoplasm. It catalyses the reaction tRNA(Cys) + L-cysteine + ATP = L-cysteinyl-tRNA(Cys) + AMP + diphosphate. This chain is Cysteine--tRNA ligase (cysS), found in Staphylococcus xylosus.